The chain runs to 592 residues: Aspartate--tRNA ligase (592 aa).

Residue glutamate 177 participates in L-aspartate binding. Residues 201-204 are aspartate; the sequence is QIFK. Arginine 223 lines the L-aspartate pocket. ATP contacts are provided by residues 223-225 and glutamine 232; that span reads RDE. Histidine 451 is an L-aspartate binding site. Glutamate 485 is a binding site for ATP. Residue arginine 492 coordinates L-aspartate. ATP is bound at residue 537–540; sequence GLDR.

It belongs to the class-II aminoacyl-tRNA synthetase family. Type 1 subfamily. As to quaternary structure, homodimer.

It is found in the cytoplasm. The catalysed reaction is tRNA(Asp) + L-aspartate + ATP = L-aspartyl-tRNA(Asp) + AMP + diphosphate. Functionally, catalyzes the attachment of L-aspartate to tRNA(Asp) in a two-step reaction: L-aspartate is first activated by ATP to form Asp-AMP and then transferred to the acceptor end of tRNA(Asp). In Bacillus licheniformis (strain ATCC 14580 / DSM 13 / JCM 2505 / CCUG 7422 / NBRC 12200 / NCIMB 9375 / NCTC 10341 / NRRL NRS-1264 / Gibson 46), this protein is Aspartate--tRNA ligase.